A 498-amino-acid polypeptide reads, in one-letter code: MGFVNTLTQASDQENQRLRASPQVFKLFVLILFVLLVLKIRRHRANRITNQYGRQICELHGDARVAKFAFSKQLSDQGKALAGDEPFIIRNGRARELVVTKPEHIYDFYKGDTKPCSLLGHAVGALAGERWSMIRRYFDPAFSFQSARQAIPELSASIDRWLDDLPLQGTGTGKGFALEIKKPCRFLPLRLAAEFVYGEIFDDKLFSALLDLNVLHEVILHDVIANKRLATRLGCWFDRAAAKRMEEFRSRWMEFNLGIIQSARGASKACPAERIYHGVEKGDLKLEEFLHTLDEILFANVDVSSAVLGTLFEHLAVNTAFQQKLRAEIETHIQTRTHTPDTDSDIDINTETGKYLSKQDTLMNFAVMEAMRLSPAFDCDFAAFSLPECTAVPKEIGGYRVPARCPVVIDAKRLNADRATWGKDGDTYRPERFRDIPPSKSRYGFMRFGVGAASGRCLGKHLADTLFKLTLIAVIERYSLHSVHDGPEVELREVVVRV.

A helical membrane pass occupies residues 20–40 (ASPQVFKLFVLILFVLLVLKI). Cys-457 serves as a coordination point for heme.

Belongs to the cytochrome P450 family. The cofactor is heme.

The protein resides in the membrane. It participates in secondary metabolite biosynthesis. Functionally, cytochrome P450 monooxygenase; part of the gene cluster that mediates the biosynthesis of aspyridones. The polyketide-amino acid backbone preaspyridone A is first assembled by the PKS-NRPS hybrid apdA. The assembly of preaspyridone A is initiated by loading of malonyl-CoA onto apdA, followed by decarboxylation to yield the acetyl starter unit. The growing polyketide chain then elongates into a tetraketide. The adpA PKS module catalyzes three Claisen condensations, as well as beta-keto processing and methylation. Alpha-methylation step during polyketide synthesis is a prerequisite and a key checkpoint for chain transfer between PKS and NRPS modules. The downstream NRPS module contains the condensation (C), adenylation (A), and thiolation (T) domains and catalyzes the incorporation of tyrosine via the formation of the L-tyrosinyl-thioester and the amide linkage between L-tyrosinyl-thioester and the tetraketide. The bimodular assembly line is terminated with a reductase (R) domain that facilitates formation and release of the tetramic acid product. Because apdA lacks a designated enoylreductase (ER) domain, the required activity is provided the enoyl reductase apdC. ApdC appears to operate with different stereoselectivity in different PKS cycle. Combined with apdC, apdA is proposed to synthesize preaspyridone A via about 20 enzymatic steps. A number of oxidative steps performed successively by the cytochrome P450 monooxygenases apdE and apdB are required for the conversion of preaspyridone A to aspyridone A. The cytochrome P450 monooxygenase apdE is responsible for the oxidative dephenylation of preaspyridone A. Finally, the predicted FAD-dependent monooxygenase apdD and the acyl-CoA dehydrogenase apdG may be involved in the transformation of aspyridone A into aspyridone B. This Emericella nidulans (strain FGSC A4 / ATCC 38163 / CBS 112.46 / NRRL 194 / M139) (Aspergillus nidulans) protein is Cytochrome P450 monooxygenase apdB.